The sequence spans 342 residues: Glucokinase (342 aa).

ATP is bound at residue 7 to 12 (GDIGGT).

The protein belongs to the bacterial glucokinase family.

Its subcellular location is the cytoplasm. The catalysed reaction is D-glucose + ATP = D-glucose 6-phosphate + ADP + H(+). This Trichormus variabilis (strain ATCC 29413 / PCC 7937) (Anabaena variabilis) protein is Glucokinase.